We begin with the raw amino-acid sequence, 248 residues long: Probable transcriptional regulatory protein Mnod_7401 (248 aa).

This sequence belongs to the TACO1 family.

It is found in the cytoplasm. This Methylobacterium nodulans (strain LMG 21967 / CNCM I-2342 / ORS 2060) protein is Probable transcriptional regulatory protein Mnod_7401.